The sequence spans 460 residues: Chromosomal replication initiator protein DnaA 1 (460 aa).

Residues 1–68 are domain I, interacts with DnaA modulators; it reads MRAWEEFLLL…KSGLVNNNNK (68 aa). The segment at 68 to 102 is domain II; sequence KPIRVHVTSVDKAAPFYKEKQMQQEKTAYFTMHYG. A domain III, AAA+ region region spans residues 103 to 321; that stretch reads SVNPEMTFSN…HALNLLAKRV (219 aa). Residues Gly-151, Gly-153, Lys-154, and Thr-155 each coordinate ATP. The segment at 322–460 is domain IV, binds dsDNA; the sequence is MYKKLSHQLL…EFFPSEEMII (139 aa).

This sequence belongs to the DnaA family. As to quaternary structure, oligomerizes as a right-handed, spiral filament on DNA at oriC.

It localises to the cytoplasm. In terms of biological role, plays an essential role in the initiation and regulation of chromosomal replication. ATP-DnaA binds to the origin of replication (oriC) to initiate formation of the DNA replication initiation complex once per cell cycle. Binds the DnaA box (a 9 base pair repeat at the origin) and separates the double-stranded (ds)DNA. Forms a right-handed helical filament on oriC DNA; dsDNA binds to the exterior of the filament while single-stranded (ss)DNA is stabiized in the filament's interior. The ATP-DnaA-oriC complex binds and stabilizes one strand of the AT-rich DNA unwinding element (DUE), permitting loading of DNA polymerase. After initiation quickly degrades to an ADP-DnaA complex that is not apt for DNA replication. Binds acidic phospholipids. The chain is Chromosomal replication initiator protein DnaA 1 from Chlamydia pneumoniae (Chlamydophila pneumoniae).